The primary structure comprises 99 residues: Small ribosomal subunit protein eS24 (99 aa).

The protein belongs to the eukaryotic ribosomal protein eS24 family.

This Pyrococcus abyssi (strain GE5 / Orsay) protein is Small ribosomal subunit protein eS24.